A 272-amino-acid polypeptide reads, in one-letter code: Proteasome subunit beta type-5 (272 aa).

Residues 1–62 constitute a propeptide, removed in mature form; it reads MINIDFDNIE…APKALEFAHG (62 aa). The active-site Nucleophile is the Thr-63.

The protein belongs to the peptidase T1B family. In terms of assembly, the 26S proteasome consists of a 20S proteasome core and two 19S regulatory subunits. The 20S proteasome core is composed of 28 subunits that are arranged in four stacked rings, resulting in a barrel-shaped structure. The two end rings are each formed by seven alpha subunits, and the two central rings are each formed by seven beta subunits. The catalytic chamber with the active sites is on the inside of the barrel.

The protein localises to the cytoplasm. It is found in the nucleus. It catalyses the reaction Cleavage of peptide bonds with very broad specificity.. Its function is as follows. The proteasome is a multicatalytic proteinase complex which is characterized by its ability to cleave peptides with Arg, Phe, Tyr, Leu, and Glu adjacent to the leaving group at neutral or slightly basic pH. The proteasome has an ATP-dependent proteolytic activity. This is Proteasome subunit beta type-5 (psmB5) from Dictyostelium discoideum (Social amoeba).